Reading from the N-terminus, the 76-residue chain is Rhesus theta defensin-1/2 subunit B (76 aa).

Residues 1–22 form the signal peptide; it reads MRTFALLTAMLLLVALHAQAEA. Residues 23–64 constitute a propeptide that is removed on maturation; sequence RQARADEAAAQQQPGADDQGMAHSFTRPENAALPLSESARGL. Residues 25–54 are disordered; sequence ARADEAAAQQQPGADDQGMAHSFTRPENAA. A compositionally biased stretch (low complexity) spans 30–44; the sequence is AAAQQQPGADDQGMA. R65 is covalently cross-linked (Cyclopeptide (Arg-Cys) (interchain with C-73 in subunit A); in form RTD-1). R65 participates in a covalent cross-link: Cyclopeptide (Arg-Cys) (interchain with C-73 in subunit B); in form RTD-2. Residues C68 and C73 are joined by a disulfide bond. Residue C73 forms a Cyclopeptide (Cys-Arg) (interchain with R-65 in subunit A); in form RTD-1 linkage. C73 participates in a covalent cross-link: Cyclopeptide (Cys-Arg) (interchain with R-65 in subunit B); in form RTD-2. Positions 74-76 are excised as a propeptide; it reads QLL.

Belongs to the alpha-defensin family. Theta subfamily. As to quaternary structure, RTD-1 is a cyclic heterodimer composed of subunits A and B; disulfide-linked. RTD-2 is a cyclic homodimer composed of two subunits B; disulfide-linked. Post-translationally, forms a cyclic peptide with 1 subunit B (RTD-2) or with 1 subunit A (RTD-1). An additional intersubunit disulfide bond is formed. In terms of tissue distribution, RTD-1 is expressed in bone marrow. Detected in promyelocytes, myelocytes and mature neutrophils and monocytes.

Functionally, RTD-1 and RTD-2 have similar antimicrobial activities against the Gram-positive bacteria S.aureus 502A and L.monocytogenes, the Gram-negative bacterium S.typhimurium, and the fungi C.albicans 16820 and C.neoformans 271A. RTD-2 is 2-3-fold less active than RTD-1 against E.coli ML35. This Macaca mulatta (Rhesus macaque) protein is Rhesus theta defensin-1/2 subunit B (RTD1B).